We begin with the raw amino-acid sequence, 218 residues long: PKHD-type hydroxylase IL0759 (218 aa).

A Fe2OG dioxygenase domain is found at 76-170 (QVARVTINRY…RLAMIGWVQS (95 aa)). Fe cation contacts are provided by histidine 94, aspartate 96, and histidine 151. Arginine 161 contributes to the 2-oxoglutarate binding site.

It depends on Fe(2+) as a cofactor. Requires L-ascorbate as cofactor.

This Idiomarina loihiensis (strain ATCC BAA-735 / DSM 15497 / L2-TR) protein is PKHD-type hydroxylase IL0759.